The chain runs to 312 residues: MDIIFYHPTFDTQWWIEALRKAIPQARVRAWKSGDNVSADYALVWHPPVEMLAGRDLKAVFALGAGVDSILSKLQAHPEMLKPSVPLFRLEDTGMGEQMQEYAVSQVLHWFRRFDDYRIQQNSSHWQPLPEYHREDFTIGILGAGVLGSKVAQSLQTWRFPLRCWSRTRKSWPGVQSFAGREELSAFLSQCRVLINLLPNTPETVGIINQQLLEKLPDGAYLLNLARGVHVVEDDLLAALDSGKVKGAMLDVFNREPLPPESPLWQHPRVTITPHVAAITRPAEAVDYISRTIAQLEKGERVCGQVDRARGY.

Arginine 227 is a catalytic residue. The active-site Proton donor is the histidine 275.

The protein belongs to the D-isomer specific 2-hydroxyacid dehydrogenase family. GhrA subfamily.

Its subcellular location is the cytoplasm. The enzyme catalyses glycolate + NADP(+) = glyoxylate + NADPH + H(+). It carries out the reaction (R)-glycerate + NAD(+) = 3-hydroxypyruvate + NADH + H(+). It catalyses the reaction (R)-glycerate + NADP(+) = 3-hydroxypyruvate + NADPH + H(+). Functionally, catalyzes the NADPH-dependent reduction of glyoxylate and hydroxypyruvate into glycolate and glycerate, respectively. The protein is Glyoxylate/hydroxypyruvate reductase A of Escherichia coli (strain SMS-3-5 / SECEC).